Reading from the N-terminus, the 139-residue chain is Large ribosomal subunit protein uL16 (139 aa).

Residues 1–16 (MLIPKRTKYRKQHRPV) are compositionally biased toward basic residues. Positions 1–22 (MLIPKRTKYRKQHRPVRSGMSK) are disordered.

It belongs to the universal ribosomal protein uL16 family. In terms of assembly, part of the 50S ribosomal subunit.

Functionally, binds 23S rRNA and is also seen to make contacts with the A and possibly P site tRNAs. The sequence is that of Large ribosomal subunit protein uL16 from Bifidobacterium longum subsp. infantis (strain ATCC 15697 / DSM 20088 / JCM 1222 / NCTC 11817 / S12).